Reading from the N-terminus, the 133-residue chain is Small ribosomal subunit protein bS16 (133 aa).

Residues E99–A133 are disordered. The span at R109–K123 shows a compositional bias: basic residues. Positions K124–A133 are enriched in basic and acidic residues.

This sequence belongs to the bacterial ribosomal protein bS16 family.

The polypeptide is Small ribosomal subunit protein bS16 (Chlorobium limicola (strain DSM 245 / NBRC 103803 / 6330)).